Here is a 496-residue protein sequence, read N- to C-terminus: E1B 55 kDa protein (496 aa).

The disordered stretch occupies residues 1–74 (MERRNPSERG…EPESRPGPSG (74 aa)). The segment covering 45–61 (GGAAAAAGGSQAAAAGA) has biased composition (low complexity). Ser-490 and Ser-491 each carry phosphoserine. Thr-495 carries the post-translational modification Phosphothreonine.

The protein belongs to the adenoviridae E1B 55 kDa protein family. In terms of assembly, interacts with host PML-4 and PML-5; this interaction promotes efficient subnuclear targeting of E1B-55K to PML nuclear bodies. Interacts with E4-ORF3 protein. Interacts with E4-ORF6 protein. Phosphorylation at the C-terminus affects the subcellular location.

Its subcellular location is the host nucleus. It is found in the host cytoplasm. Functionally, plays a major role to prevent cellular inhibition of viral genome replication. Assembles an SCF-like E3 ubiquitin ligase complex based on the cellular proteins ELOB, ELOC, CUL5 and RBX1, in cooperation with viral E4orf6. This viral RING-type ligase ubiquitinates cellular substrates and targets them to proteasomal degradation: TP53/p53, LIG4, MRE11-RAD50-NBS1 (MRN) complex, ITGA3, DAXX and BLM. E1B-55K probably acts as the substrate-specific adapter of the SCF-like E3 ubiquitin ligase complex. Degradation of host TP53/p53 activity is essential for preventing E1A-induced TP53 accumulation that would otherwise lead to cell apoptosis and growth arrest. E1B-55K also inactivates TP53 transcription-factor activity by binding its transactivation domain. E1B-55K also functions as a SUMO1 E3 ligase for TP53 which causes the latter to be sequestered in promyelocytic leukemia (PML) nuclear bodies thereby contributing to maximal inhibition of TP53 function. The chain is E1B 55 kDa protein from Homo sapiens (Human).